Consider the following 674-residue polypeptide: MATARLPSRSFLSPAQQSYPRLPASVRLCLSHHEQPPTGPKRHRRAATSHPAFSAAARGRAKKIPIADTDEPAAGVRVTDRGISYRLDGAPFEFQYSYTEAPRARPVALREAPFMPFGPEATPRPWTGRKPLPKSRKELPEFDSFVLPAPGKKGVKPVQSPGPFLAGMEPRYQSVSREDILGEPLTKEEVSELVKGSLKSKRQLNMGRDGLTHNMLENIHSHWKRKRVCKIKCKGVCTIDMDNICHQLEEKVGGKVIHRQGGVIFLFRGRNYNYRTRPCFPLMLWKPVAPVYPRLVTKVPGGLTPDEATEMRTRGHQLPPICKLGKNGVYANLVNQVREAFEACDLVRVDCSGLNKSDCRKIGAKLKDLVPCILLSFEFEHILMWRGSDWKSSLPPLENSYEVTKVQESFSGKESNEKVTHSGNVLAQIELVSAATSHKNWNLDEGQEKFKDSTDSDMVLNSAKDVPALFHSTGISRTEPSADIPLEYSPLNPVCDIMDPSLNCRSIPTNNCESRALVEKSEHCPDDYNLEMKRKRNDGTKGTVVLNSGSKVEGLLCLLEQAIHSGRALVLSEDELADSDLVYEKSVAFTKSIPRRLVFENTRRKSSARRNVPDNHARTKTHLVENKMLSSPVENKFIVNGGSAMQTIDHGQEFLSDVVHQGTLRVDELAKLLA.

The N-terminal 54 residues, M1–S54, are a transit peptide targeting the chloroplast. The tract at residues S31–A61 is disordered. Low complexity predominate over residues T48 to A57. 2 CRM domains span residues E183–C279 and G301–L397. Residues G554–L576 are CRS2 binding.

Interacts with CRS2 and RNA. Part of large ribonucleo-protein complexes that include group IIB introns, CRS2 and CAF1.

Its subcellular location is the plastid. The protein localises to the chloroplast stroma. In terms of biological role, required for the splicing of group IIB introns in chloroplasts. Forms splicing particles with CRS2. Interacts with RNA and confers intron specificity of the splicing particles. The chain is CRS2-associated factor 1, chloroplastic (CAF1) from Zea mays (Maize).